The primary structure comprises 912 residues: Lateral signaling target protein 2 homolog (912 aa).

The segment covering 323–332 has biased composition (low complexity); sequence NVNTSNNSDN. Disordered regions lie at residues 323–360, 455–610, 664–745, and 769–846; these read NVNTSNNSDNSDSRVDDSPNDELRHESETRDNRNSSFY, ADSG…ESSQ, NSSP…ASSA, and GGGS…APPR. Positions 333 to 355 are enriched in basic and acidic residues; it reads SDSRVDDSPNDELRHESETRDNR. Positions 455 to 468 are enriched in polar residues; the sequence is ADSGLGTANPSVDN. A compositionally biased stretch (acidic residues) spans 486 to 505; sequence SSEEGEIDEYDNEEDDEDSD. Basic residues predominate over residues 530-544; that stretch reads YRTHKQQHHHRHRRS. Polar residues-rich tracts occupy residues 545–556 and 572–590; these read SGSIMSATSSRK and VPSNQGTSSKTYSNCDTSP. The segment covering 591–610 has biased composition (low complexity); sequence SSGNQSECSSTSSTTGESSQ. The segment covering 682–699 has biased composition (basic and acidic residues); sequence DKPKEPDPTDLFEFRASE. 4 stretches are compositionally biased toward polar residues: residues 705–717, 735–745, 780–801, and 822–834; these read PGQNSGGSSQSIY, PGTSPIRASSA, ERSVSLSETSIVVENNGGATDS, and SRSSPNSPVNGTS. An FYVE-type zinc finger spans residues 850–910; it reads DGDAPRCMAC…VCRDCYVREV (61 aa). Zn(2+) contacts are provided by Cys-856, Cys-859, Cys-872, Cys-875, Cys-880, Cys-883, Cys-902, and Cys-905.

Belongs to the lst-2 family.

Functionally, negative regulator of epidermal growth factor receptor (EGFR) signaling. In Aedes aegypti (Yellowfever mosquito), this protein is Lateral signaling target protein 2 homolog.